The chain runs to 207 residues: Large ribosomal subunit protein uL4 (207 aa).

Positions 44–78 (QRQGTHDVKNRSEVRGGGRKPWRQKGTGRARQGSI) are disordered. Residues 47 to 59 (GTHDVKNRSEVRG) are compositionally biased toward basic and acidic residues. The segment covering 60–71 (GGRKPWRQKGTG) has biased composition (basic residues).

It belongs to the universal ribosomal protein uL4 family. As to quaternary structure, part of the 50S ribosomal subunit.

In terms of biological role, one of the primary rRNA binding proteins, this protein initially binds near the 5'-end of the 23S rRNA. It is important during the early stages of 50S assembly. It makes multiple contacts with different domains of the 23S rRNA in the assembled 50S subunit and ribosome. Forms part of the polypeptide exit tunnel. The sequence is that of Large ribosomal subunit protein uL4 from Brevibacillus brevis (strain 47 / JCM 6285 / NBRC 100599).